A 204-amino-acid polypeptide reads, in one-letter code: uncharacterized protein (204 aa).

The Tele-phosphohistidine intermediate role is filled by H9. E86 (proton donor/acceptor) is an active-site residue.

Belongs to the phosphoglycerate mutase family.

This is an uncharacterized protein from Acanthamoeba polyphaga (Amoeba).